The primary structure comprises 441 residues: tRNA-2-methylthio-N(6)-dimethylallyladenosine synthase (441 aa).

Residues 5–121 (KKLFIKTYGC…LPQMEARLRE (117 aa)) form the MTTase N-terminal domain. [4Fe-4S] cluster is bound by residues C14, C50, C84, C159, C163, and C166. A Radical SAM core domain is found at 145-380 (ARRAPSAFLT…TRQQQDIQQS (236 aa)). The 63-residue stretch at 379–441 (QSMVGRDVSV…RNSLAAVTLA (63 aa)) folds into the TRAM domain.

The protein belongs to the methylthiotransferase family. MiaB subfamily. Monomer. The cofactor is [4Fe-4S] cluster.

It localises to the cytoplasm. The enzyme catalyses N(6)-dimethylallyladenosine(37) in tRNA + (sulfur carrier)-SH + AH2 + 2 S-adenosyl-L-methionine = 2-methylsulfanyl-N(6)-dimethylallyladenosine(37) in tRNA + (sulfur carrier)-H + 5'-deoxyadenosine + L-methionine + A + S-adenosyl-L-homocysteine + 2 H(+). Functionally, catalyzes the methylthiolation of N6-(dimethylallyl)adenosine (i(6)A), leading to the formation of 2-methylthio-N6-(dimethylallyl)adenosine (ms(2)i(6)A) at position 37 in tRNAs that read codons beginning with uridine. The sequence is that of tRNA-2-methylthio-N(6)-dimethylallyladenosine synthase from Roseobacter denitrificans (strain ATCC 33942 / OCh 114) (Erythrobacter sp. (strain OCh 114)).